The sequence spans 361 residues: Histidinol-phosphate aminotransferase (361 aa).

K219 carries the N6-(pyridoxal phosphate)lysine modification.

It belongs to the class-II pyridoxal-phosphate-dependent aminotransferase family. Histidinol-phosphate aminotransferase subfamily. In terms of assembly, homodimer. Requires pyridoxal 5'-phosphate as cofactor.

It carries out the reaction L-histidinol phosphate + 2-oxoglutarate = 3-(imidazol-4-yl)-2-oxopropyl phosphate + L-glutamate. Its pathway is amino-acid biosynthesis; L-histidine biosynthesis; L-histidine from 5-phospho-alpha-D-ribose 1-diphosphate: step 7/9. The polypeptide is Histidinol-phosphate aminotransferase (Cereibacter sphaeroides (strain ATCC 17029 / ATH 2.4.9) (Rhodobacter sphaeroides)).